A 335-amino-acid polypeptide reads, in one-letter code: Meiotic expression up-regulated protein 14 (335 aa).

It is found in the cytoplasm. The protein resides in the cytoskeleton. It localises to the microtubule organizing center. Its subcellular location is the spindle pole body. The protein localises to the nucleus membrane. It is found in the prospore membrane. Has a role in nuclear division during meiosis II where it stabilizes the proper segregation of the spindle pole bodies. Also has a role in the formation and extension of the forespore membrane. This is Meiotic expression up-regulated protein 14 (meu14) from Schizosaccharomyces pombe (strain 972 / ATCC 24843) (Fission yeast).